Reading from the N-terminus, the 156-residue chain is MPKESGRKVVATNRKARHDYHVLDTYEAGIALMGTEVKSLREGHASMVDGFCTFYNDELWMEGIHIPEYNQGSWTNHSARRRRKLLLHREELTKISHKIRESGFTIVPLQLYFLDGKAKVEIGVARGKKEYDKRQTLREQQDKREALRVMRERNRG.

A disordered region spans residues 131 to 156 (YDKRQTLREQQDKREALRVMRERNRG).

This sequence belongs to the SmpB family.

The protein resides in the cytoplasm. Required for rescue of stalled ribosomes mediated by trans-translation. Binds to transfer-messenger RNA (tmRNA), required for stable association of tmRNA with ribosomes. tmRNA and SmpB together mimic tRNA shape, replacing the anticodon stem-loop with SmpB. tmRNA is encoded by the ssrA gene; the 2 termini fold to resemble tRNA(Ala) and it encodes a 'tag peptide', a short internal open reading frame. During trans-translation Ala-aminoacylated tmRNA acts like a tRNA, entering the A-site of stalled ribosomes, displacing the stalled mRNA. The ribosome then switches to translate the ORF on the tmRNA; the nascent peptide is terminated with the 'tag peptide' encoded by the tmRNA and targeted for degradation. The ribosome is freed to recommence translation, which seems to be the essential function of trans-translation. This Arthrobacter sp. (strain FB24) protein is SsrA-binding protein.